The chain runs to 168 residues: Sensor histidine kinase component HK1 (168 aa).

Positions 1–141 constitute a Histidine kinase; second part domain; that stretch reads MPITPLLHES…ELRITLPTPR (141 aa). Residues 137 to 168 form a disordered region; it reads LPTPRPPFHEELPRITSSDTKDPNREHDTSDQ. Over residues 143–168 the composition is skewed to basic and acidic residues; sequence PFHEELPRITSSDTKDPNREHDTSDQ.

As to quaternary structure, interacts with HK2.

The enzyme catalyses ATP + protein L-histidine = ADP + protein N-phospho-L-histidine.. Member of the three-protein two-component system HK1/HK2/TcrA. Kinase that binds ATP and catalyzes the transfer of a phosphoryl group from ATP to HK2. In Mycobacterium tuberculosis (strain ATCC 25618 / H37Rv), this protein is Sensor histidine kinase component HK1.